Consider the following 193-residue polypeptide: Xanthine phosphoribosyltransferase (193 aa).

Positions 20 and 27 each coordinate xanthine. 129-133 provides a ligand contact to 5-phospho-alpha-D-ribose 1-diphosphate; that stretch reads ANGKA. Residue K157 participates in xanthine binding.

The protein belongs to the purine/pyrimidine phosphoribosyltransferase family. Xpt subfamily. Homodimer.

Its subcellular location is the cytoplasm. It catalyses the reaction XMP + diphosphate = xanthine + 5-phospho-alpha-D-ribose 1-diphosphate. It functions in the pathway purine metabolism; XMP biosynthesis via salvage pathway; XMP from xanthine: step 1/1. Its function is as follows. Converts the preformed base xanthine, a product of nucleic acid breakdown, to xanthosine 5'-monophosphate (XMP), so it can be reused for RNA or DNA synthesis. This Bifidobacterium longum subsp. infantis (strain ATCC 15697 / DSM 20088 / JCM 1222 / NCTC 11817 / S12) protein is Xanthine phosphoribosyltransferase.